A 130-amino-acid polypeptide reads, in one-letter code: Large ribosomal subunit protein eL32 (130 aa).

The protein belongs to the eukaryotic ribosomal protein eL32 family. In terms of assembly, part of the 50S ribosomal subunit.

In Pyrococcus furiosus (strain ATCC 43587 / DSM 3638 / JCM 8422 / Vc1), this protein is Large ribosomal subunit protein eL32.